The primary structure comprises 122 residues: Large ribosomal subunit protein uL14 (122 aa).

The protein belongs to the universal ribosomal protein uL14 family. In terms of assembly, part of the 50S ribosomal subunit. Forms a cluster with proteins L3 and L19. In the 70S ribosome, L14 and L19 interact and together make contacts with the 16S rRNA in bridges B5 and B8.

Its function is as follows. Binds to 23S rRNA. Forms part of two intersubunit bridges in the 70S ribosome. The chain is Large ribosomal subunit protein uL14 from Rhodospirillum centenum (strain ATCC 51521 / SW).